We begin with the raw amino-acid sequence, 102 residues long: MSVLARLEATIAARKGADPDSSWTAKLLAKGPEKCAEKFGEEAVEAIIEAVKGDRAKLTSEAADVLYHLLVMLAARDVALAEVLAELERREGISGISEKASR.

This sequence belongs to the PRA-PH family.

It is found in the cytoplasm. The enzyme catalyses 1-(5-phospho-beta-D-ribosyl)-ATP + H2O = 1-(5-phospho-beta-D-ribosyl)-5'-AMP + diphosphate + H(+). The protein operates within amino-acid biosynthesis; L-histidine biosynthesis; L-histidine from 5-phospho-alpha-D-ribose 1-diphosphate: step 2/9. The polypeptide is Phosphoribosyl-ATP pyrophosphatase (Dinoroseobacter shibae (strain DSM 16493 / NCIMB 14021 / DFL 12)).